A 268-amino-acid polypeptide reads, in one-letter code: TodF product hydratase (268 aa).

It belongs to the hydratase/decarboxylase family.

It participates in xenobiotic degradation; toluene degradation. Functionally, converts the product of 2-hydroxy-6-oxo-2,4-heptadienoate hydrolase. This Pseudomonas putida (strain ATCC 700007 / DSM 6899 / JCM 31910 / BCRC 17059 / LMG 24140 / F1) protein is TodF product hydratase (todJ).